A 101-amino-acid polypeptide reads, in one-letter code: Urease subunit beta (101 aa).

This sequence belongs to the urease beta subunit family. In terms of assembly, heterotrimer of UreA (gamma), UreB (beta) and UreC (alpha) subunits. Three heterotrimers associate to form the active enzyme.

The protein resides in the cytoplasm. The enzyme catalyses urea + 2 H2O + H(+) = hydrogencarbonate + 2 NH4(+). Its pathway is nitrogen metabolism; urea degradation; CO(2) and NH(3) from urea (urease route): step 1/1. The chain is Urease subunit beta from Azotobacter vinelandii (strain DJ / ATCC BAA-1303).